The sequence spans 491 residues: Cobyric acid synthase (491 aa).

The GATase cobBQ-type domain maps to 253–429 (ARRVAVIRLP…WHGALEGDEL (177 aa)). Catalysis depends on Cys-334, which acts as the Nucleophile. His-421 is an active-site residue.

It belongs to the CobB/CobQ family. CobQ subfamily.

The protein operates within cofactor biosynthesis; adenosylcobalamin biosynthesis. Its function is as follows. Catalyzes amidations at positions B, D, E, and G on adenosylcobyrinic A,C-diamide. NH(2) groups are provided by glutamine, and one molecule of ATP is hydrogenolyzed for each amidation. This is Cobyric acid synthase from Mycolicibacterium gilvum (strain PYR-GCK) (Mycobacterium gilvum (strain PYR-GCK)).